The chain runs to 273 residues: Undecaprenyl-diphosphatase (273 aa).

7 helical membrane passes run Ser6–Ser26, Ala45–Trp65, Leu90–His110, Leu116–Ala136, Tyr190–Leu210, Gly222–Ile242, and Ile252–Phe272.

Belongs to the UppP family.

The protein resides in the cell inner membrane. It carries out the reaction di-trans,octa-cis-undecaprenyl diphosphate + H2O = di-trans,octa-cis-undecaprenyl phosphate + phosphate + H(+). Its function is as follows. Catalyzes the dephosphorylation of undecaprenyl diphosphate (UPP). Confers resistance to bacitracin. In Escherichia coli O7:K1 (strain IAI39 / ExPEC), this protein is Undecaprenyl-diphosphatase.